We begin with the raw amino-acid sequence, 797 residues long: Probable exo-1,4-beta-xylosidase bxlB (797 aa).

The N-terminal stretch at 1-21 is a signal peptide; the sequence is MPLICIVYFLQYLDKIAISYA. N-linked (GlcNAc...) asparagine glycosylation is found at N86 and N126. D312 is an active-site residue. N-linked (GlcNAc...) asparagine glycans are attached at residues N364, N431, N442, N483, N644, and N787.

The protein belongs to the glycosyl hydrolase 3 family.

The protein resides in the secreted. It carries out the reaction Hydrolysis of (1-&gt;4)-beta-D-xylans, to remove successive D-xylose residues from the non-reducing termini.. Its pathway is glycan degradation; xylan degradation. In terms of biological role, xylan 1,4-beta-xylosidase involved in the hydrolysis of xylan, a major structural heterogeneous polysaccharide found in plant biomass representing the second most abundant polysaccharide in the biosphere, after cellulose. The sequence is that of Probable exo-1,4-beta-xylosidase bxlB (bxlB) from Aspergillus oryzae (strain ATCC 42149 / RIB 40) (Yellow koji mold).